Reading from the N-terminus, the 578-residue chain is MNHKEITTLWSWIIVEELVRNSICFFCISPGSRSTPLTVAASRHQKTTCKIFPDERAAAFFALGYARATGRPAVLICTSGTAAANYFPAVVEASMGHQPMLVLSADRPFELRETGANQTIRQSGIYGSYSRWSFQLPEPSTDTPPEAILSAIDYAVSTCTANPSGPVHLNIAFREPLEPVPLNENSPWLSSLGKWNSSRAPWSRTLQRQSSPESASVKEVARLLASAENPLIIAGHLDRPADAQAVLNLSKSLNIALYADISSQLRLHKETVALQQAWLSDKYVEQHRADLVLHFGGSLVGKKPGQAMKTWRPDHTIVIKNHPDRYAPDHTVTMSIEASVKAFAEALAKTSQPQGKKANPIDEIEQEIERFTRPDSPVTEISAARIVSRLIDPGHGLFLANSMPVRDMDMYATRSGGTIIPTAMNRGASGIDGIISSAAGFASGLERPVTLLIGDISFLHDMNALCLLRSMTVPLTIVVINNNGGGIFSFLPISDQPDVFEKNFGTPQEFNIAAAATAFSIEYQCPPSNAAFSESYMAARSSAETSIIEIRSRRDENLALHRKLNQSLIDRLDRQQSC.

This sequence belongs to the TPP enzyme family. MenD subfamily. As to quaternary structure, homodimer. The cofactor is Mg(2+). Requires Mn(2+) as cofactor. Thiamine diphosphate is required as a cofactor.

It carries out the reaction isochorismate + 2-oxoglutarate + H(+) = 5-enolpyruvoyl-6-hydroxy-2-succinyl-cyclohex-3-ene-1-carboxylate + CO2. Its pathway is quinol/quinone metabolism; 1,4-dihydroxy-2-naphthoate biosynthesis; 1,4-dihydroxy-2-naphthoate from chorismate: step 2/7. It functions in the pathway quinol/quinone metabolism; menaquinone biosynthesis. In terms of biological role, catalyzes the thiamine diphosphate-dependent decarboxylation of 2-oxoglutarate and the subsequent addition of the resulting succinic semialdehyde-thiamine pyrophosphate anion to isochorismate to yield 2-succinyl-5-enolpyruvyl-6-hydroxy-3-cyclohexene-1-carboxylate (SEPHCHC). This chain is 2-succinyl-5-enolpyruvyl-6-hydroxy-3-cyclohexene-1-carboxylate synthase, found in Prosthecochloris aestuarii (strain DSM 271 / SK 413).